The sequence spans 813 residues: Nuclear pore complex protein 5 (813 aa).

This sequence belongs to the nucleoporin Nup84/Nup107 family. Part of the nuclear pore complex (NPC). May interact with mdf-1.

It localises to the nucleus. Its subcellular location is the nuclear pore complex. The protein resides in the chromosome. The protein localises to the centromere. It is found in the kinetochore. It localises to the nucleus membrane. In terms of biological role, involved in kinetochore assembly and chromosome segregation during embryonic mitosis. Required for the localization of the NDC80 complex member him-10, the chromosomal passenger complex component air-2 and nuclear pore complex proteins npp-23 and npp-15 to kinetochores during metaphase. Required for npp-23 localization to the nuclear envelope during interphase. Recruits mdf-1, a component of the spindle assembly checkpoint, to the nuclear envelope. Appears dispensable for the assembly of the nuclear pore complex and for nuclear protein import. In Caenorhabditis elegans, this protein is Nuclear pore complex protein 5.